The following is a 277-amino-acid chain: Sulfur carrier protein FdhD (277 aa).

Residue cysteine 121 is the Cysteine persulfide intermediate of the active site. Residue 260–265 (FCKPGR) coordinates Mo-bis(molybdopterin guanine dinucleotide).

This sequence belongs to the FdhD family.

Its subcellular location is the cytoplasm. Its function is as follows. Required for formate dehydrogenase (FDH) activity. Acts as a sulfur carrier protein that transfers sulfur from IscS to the molybdenum cofactor prior to its insertion into FDH. The sequence is that of Sulfur carrier protein FdhD from Shigella dysenteriae serotype 1 (strain Sd197).